A 187-amino-acid polypeptide reads, in one-letter code: MIKEILEKTGALMEGHFILSSGKHSSRYVQCARLFEFPEYGDIVGEELAKLLRKYDVETVVGPAMGGVILSYVVARYLKARSLFAERENGVMKLRRGFFVRPGEKAAVVEDVVTTGGSVKEVIELLKEYGANVVCVGSIIDRSGGKVDFGVPFESLLKLDLPVYDPEDCPLCKQGIPAEKPGSRGLK.

Residue 110–118 (EDVVTTGGS) participates in 5-phospho-alpha-D-ribose 1-diphosphate binding. Residues threonine 114 and arginine 142 each contribute to the orotate site.

This sequence belongs to the purine/pyrimidine phosphoribosyltransferase family. PyrE subfamily. In terms of assembly, homodimer. Requires Mg(2+) as cofactor.

The catalysed reaction is orotidine 5'-phosphate + diphosphate = orotate + 5-phospho-alpha-D-ribose 1-diphosphate. Its pathway is pyrimidine metabolism; UMP biosynthesis via de novo pathway; UMP from orotate: step 1/2. Catalyzes the transfer of a ribosyl phosphate group from 5-phosphoribose 1-diphosphate to orotate, leading to the formation of orotidine monophosphate (OMP). The sequence is that of Orotate phosphoribosyltransferase from Thermotoga neapolitana (strain ATCC 49049 / DSM 4359 / NBRC 107923 / NS-E).